The sequence spans 506 residues: Pisatin demethylase (506 aa).

Cys453 serves as a coordination point for heme.

Belongs to the cytochrome P450 family. It depends on heme as a cofactor.

Functionally, can detoxify the phytoalexin pisatin from garden pea. Pisatin is an antimicrobial compound produced by pea in response to infection by plant pathogens. The polypeptide is Pisatin demethylase (PDA6-1) (Fusarium vanettenii (Neocosmospora pisi)).